Consider the following 448-residue polypeptide: Chromogranin-A (448 aa).

The signal sequence occupies residues 1-18 (MRSAVVLALLLCAGQVIA). A disulfide bridge connects residues Cys-35 and Cys-56. Residues 116–251 (LKEVTEEALS…AFNPHPSLSY (136 aa)) are disordered. Basic and acidic residues-rich tracts occupy residues 129-139 (AEARGDSKEVE) and 158-175 (QESR…KEAI). Ser-197 carries the phosphoserine modification. Residues 205 to 222 (VDREKGLGAERGQQAKRE) are compositionally biased toward basic and acidic residues. The span at 223-238 (EEEDEAGEKADAEEEG) shows a compositional bias: acidic residues. Ser-258 and Ser-288 each carry phosphoserine. The segment at 263-429 (LVVDGARKTG…PEDQELESLS (167 aa)) is disordered. Gly-308 is modified (glycine amide). Positions 310 to 350 (KSRELEQEKEQERLSKEWEDAKRWSKMDQLAKELTAEKRLE) are enriched in basic and acidic residues. Phosphoserine occurs at positions 311, 324, and 362. Met-363 is subject to Methionine sulfoxide. 4 positions are modified to phosphoserine: Ser-389, Ser-393, Ser-415, and Ser-429. Residues 405–422 (YPEEKKEEEGSANRRPED) are compositionally biased toward basic and acidic residues. An O-linked (Xyl...) (chondroitin sulfate) serine glycan is attached at Ser-415.

Belongs to the chromogranin/secretogranin protein family. In terms of assembly, self-interacts; self-assembly is promoted in vitro by chondroitin sulfate attachment which occurs at mildly acidic pH conditions. Interacts with SCG3. Interacts with ITPR1 in the secretory granules. In terms of processing, O-glycosylated; contains chondroitin sulfate (CS). CS attachment is pH-dependent, being observed at mildly acidic conditions of pH 5 but not at neutral pH, and promotes self-assembly in vitro. As to expression, highly expressed in adrenal medulla and pituitary gland. Weaker expression detected in cerebrum, cerebellum, spinal cord, liver, thyroid gland, striated muscle, lung, spleen, kidney, parotid gland, and sublingual gland.

The protein resides in the secreted. The protein localises to the cytoplasmic vesicle. It is found in the secretory vesicle. Its subcellular location is the neuronal dense core vesicle. Strongly inhibits glucose induced insulin release from the pancreas. Functionally, inhibits catecholamine release from chromaffin cells and noradrenergic neurons by acting as a non-competitive nicotinic cholinergic antagonist. Can induce mast cell migration, degranulation and production of cytokines and chemokines. Its function is as follows. Regulates granule biogenesis in endocrine cells by up-regulating the transcription of protease nexin 1 (SERPINE2) via a cAMP-PKA-SP1 pathway. This leads to inhibition of granule protein degradation in the Golgi complex which in turn promotes granule formation. The protein is Chromogranin-A (CHGA) of Equus caballus (Horse).